The following is a 421-amino-acid chain: tRNA (guanine(37)-N(1))-methyltransferase (421 aa).

S-adenosyl-L-methionine contacts are provided by residues arginine 198, 242-243 (DL), 270-271 (DA), and asparagine 293.

This sequence belongs to the class I-like SAM-binding methyltransferase superfamily. TRM5/TYW2 family. As to quaternary structure, monomer.

Its subcellular location is the mitochondrion matrix. The protein localises to the nucleus. The protein resides in the cytoplasm. It carries out the reaction guanosine(37) in tRNA + S-adenosyl-L-methionine = N(1)-methylguanosine(37) in tRNA + S-adenosyl-L-homocysteine + H(+). In terms of biological role, specifically methylates the N1 position of guanosine-37 in various cytoplasmic and mitochondrial tRNAs. Methylation is not dependent on the nature of the nucleoside 5' of the target nucleoside. This is the first step in the biosynthesis of wybutosine (yW), a modified base adjacent to the anticodon of tRNAs and required for accurate decoding. In Paramecium tetraurelia, this protein is tRNA (guanine(37)-N(1))-methyltransferase.